Reading from the N-terminus, the 268-residue chain is Small ribosomal subunit protein uS3 (268 aa).

One can recognise a KH type-2 domain in the interval 38-106; the sequence is IRKLLATGME…QVQLNILEVK (69 aa). The tract at residues 218-268 is disordered; sequence VAAPAGDRPRRERPSRPRRSGATGTTATSTEAGRAATATADAPATTEQKEG. The segment covering 237–268 has biased composition (low complexity); the sequence is SGATGTTATSTEAGRAATATADAPATTEQKEG.

This sequence belongs to the universal ribosomal protein uS3 family. As to quaternary structure, part of the 30S ribosomal subunit. Forms a tight complex with proteins S10 and S14.

Its function is as follows. Binds the lower part of the 30S subunit head. Binds mRNA in the 70S ribosome, positioning it for translation. The chain is Small ribosomal subunit protein uS3 from Rhodococcus jostii (strain RHA1).